Here is a 185-residue protein sequence, read N- to C-terminus: Elongation factor P (185 aa).

It belongs to the elongation factor P family.

The protein resides in the cytoplasm. The protein operates within protein biosynthesis; polypeptide chain elongation. Its function is as follows. Involved in peptide bond synthesis. Stimulates efficient translation and peptide-bond synthesis on native or reconstituted 70S ribosomes in vitro. Probably functions indirectly by altering the affinity of the ribosome for aminoacyl-tRNA, thus increasing their reactivity as acceptors for peptidyl transferase. The chain is Elongation factor P from Staphylococcus carnosus (strain TM300).